The chain runs to 1186 residues: MEQEDQQYEEDSSQFNKNNYVPDDNSGEKEQPATTTEITTTTTTTTPTAIDNNDSDLTEDVINAVSKYKDGTSSKSVKKTRRKFAMNIATDEVFNLPPMEQQQQQQHLQPPLSPNSASNTNFGAAATFSPTSILSKNNKIITSQQTSSTSISPLKPSPLSFSSGILPPSSRIYESPPTLGKYDKVILVILSQQYLQNQVNIFPIKLIDRERINLIHQNILSNEFQLLKSLKHSGIVNYIGMINDNTGFGIVQEFYENGSLSDIYNRSGAFQESLVAKYTLQILEALGYIHSQGIVHRNLKSNNVLLAKGGKVKISDFAIGIRSSAIEPSIRFSLNGYPFWTSPEVLSMKPFNHKVDSWSIGCLIMELIVGHPPFSHLGPMEALIEIINPSTTILPNCLDENEQSLFSLELNQFLELCFKKEPSDRASVHDLLRHPWLSMFNDSSSSSSSSSSQAHPTVQSNNLNGNVNSRTHGEFYSLDFLSQFEQNEKEISKILSSGDQLDSTSNQIDLKKFQFKHYNKKQQQQYNYNYNNYNNNNNNNNNTNDNDNECGEQTEEINLSSLSKDEQIERLKAIIDQNETMANNLKYTMQEVLQEQTKYYEICESMKSKTLEILNQNKTGARISAHSNSLLKRTNQMANDLGRKYEILQSNIKRLEDYLITKDDCAKKLANVVYRNKISFDSLLNPTLAANLLYQIGSKTWKKGQEKRAFATLKDNFLFFFKNEKSSYPIDVIYLNDKRNISITSIQDSKKKAYIICIGTTIHDQNNLDPSNNNESVNLSTSPGSLVNSNSNPSISNSLNNNNNNNNNNNNNNNGNPNVIITTNNNCNSNSNGNNIATPPISIPNGKEVKEGKEIKEIKEPKEKDKDKEKDKDKEKDKDKEKDKDKEKEKDKDKENNNNNNSNNNNNNGNNYNSSETIWCLLAFDNSKNMENWYGVLDSVVPWYDKRAYEISKPMLPIENKKHQKQKSLDSTNKQSPGSLGGAGGDVSWKKESGGIKFQGVVGVRLDDLMTRESPTAELPYFLSKMLKFLEKNVDEEGILRLSGSSTEILEMKQQLQRGESIDYTYKDPHAVTGLLKLFLRELPESILPEHLRIQSTEILSNGRFGEKEKIKEIQTLLSNLSRPHYNVLKHMLFFAKLVVDRSEYNKMVIANVTTCFSPTLRIPPGLFNFLINTYDLSFPKFNLSV.

Residues 1–12 (MEQEDQQYEEDS) show a composition bias toward acidic residues. Disordered stretches follow at residues 1–55 (MEQE…NNDS) and 99–122 (MEQQQQQQHLQPPLSPNSASNTNF). Low complexity-rich tracts occupy residues 34-48 (TTTEITTTTTTTTPT) and 99-110 (MEQQQQQQHLQP). In terms of domain architecture, Protein kinase spans 173–437 (YESPPTLGKY…VHDLLRHPWL (265 aa)). Residues 179 to 187 (LGKYDKVIL) and K205 contribute to the ATP site. Disordered regions lie at residues 447–468 (SSSSSSQAHPTVQSNNLNGNVN) and 530–551 (YNNYNNNNNNNNNTNDNDNECG). Polar residues predominate over residues 453–468 (QAHPTVQSNNLNGNVN). Over residues 530 to 545 (YNNYNNNNNNNNNTND) the composition is skewed to low complexity. Residues 631–659 (LKRTNQMANDLGRKYEILQSNIKRLEDYL) are a coiled coil. Residues 766 to 784 (NNLDPSNNNESVNLSTSPG) show a composition bias toward polar residues. Disordered regions lie at residues 766–911 (NNLD…NGNN) and 959–988 (ENKKHQKQKSLDSTNKQSPGSLGGAGGDVS). Low complexity predominate over residues 785 to 836 (SLVNSNSNPSISNSLNNNNNNNNNNNNNNNGNPNVIITTNNNCNSNSNGNNI). Residues 847-896 (KEVKEGKEIKEIKEPKEKDKDKEKDKDKEKDKDKEKDKDKEKEKDKDKEN) show a composition bias toward basic and acidic residues. Residues 875 to 909 (EKDKDKEKDKDKEKEKDKDKENNNNNNSNNNNNNG) adopt a coiled-coil conformation. A compositionally biased stretch (low complexity) spans 897-911 (NNNNNSNNNNNNGNN). Residues 969–978 (LDSTNKQSPG) show a composition bias toward polar residues. The 183-residue stretch at 1004 to 1186 (VRLDDLMTRE…LSFPKFNLSV (183 aa)) folds into the Rho-GAP domain.

The protein belongs to the protein kinase superfamily. STE Ser/Thr protein kinase family.

The chain is Probable inactive serine/threonine-protein kinase DDB_G0293184 from Dictyostelium discoideum (Social amoeba).